We begin with the raw amino-acid sequence, 223 residues long: Small ribosomal subunit protein uS5 (223 aa).

Low complexity predominate over residues 1–15 (MTEAVAAEATETAPA). The segment at 1 to 51 (MTEAVAAEATETAPATDDRRGGRRGERGDRGQGRGDRGGRGGRDGGREAEK) is disordered. Residues 16-51 (TDDRRGGRRGERGDRGQGRGDRGGRGGRDGGREAEK) are compositionally biased toward basic and acidic residues. Positions 54 to 117 (FVERVVTINR…EEAKKSFFRV (64 aa)) constitute an S5 DRBM domain.

This sequence belongs to the universal ribosomal protein uS5 family. In terms of assembly, part of the 30S ribosomal subunit. Contacts proteins S4 and S8.

Its function is as follows. With S4 and S12 plays an important role in translational accuracy. Functionally, located at the back of the 30S subunit body where it stabilizes the conformation of the head with respect to the body. The protein is Small ribosomal subunit protein uS5 of Paenarthrobacter aurescens (strain TC1).